Reading from the N-terminus, the 342-residue chain is Heat-inducible transcription repressor HrcA (342 aa).

Belongs to the HrcA family.

In terms of biological role, negative regulator of class I heat shock genes (grpE-dnaK-dnaJ and groELS operons). Prevents heat-shock induction of these operons. This chain is Heat-inducible transcription repressor HrcA, found in Onion yellows phytoplasma (strain OY-M).